The sequence spans 606 residues: Peptide-N(4)-(N-acetyl-beta-glucosaminyl)asparagine amidase (606 aa).

The region spanning 2 to 108 (PVTEVGSLPE…IAEKIRQHYS (107 aa)) is the Thioredoxin domain. Zn(2+) is bound by residues Cys-191, Cys-194, Cys-225, and Cys-228. Cys-251 serves as the catalytic Nucleophile. Residues His-278 and Asp-295 contribute to the active site. The PAW domain occupies 404-606 (DLGGRITGSE…SFSVKIWMKN (203 aa)).

This sequence belongs to the transglutaminase-like superfamily. PNGase family. Requires Zn(2+) as cofactor.

The protein resides in the cytoplasm. The protein localises to the endoplasmic reticulum. It catalyses the reaction Hydrolysis of an N(4)-(acetyl-beta-D-glucosaminyl)asparagine residue in which the glucosamine residue may be further glycosylated, to yield a (substituted) N-acetyl-beta-D-glucosaminylamine and a peptide containing an aspartate residue.. Its activity is regulated as follows. Inhibited by Zn(2+) and z-VAD-fmk (caspase inhibitor) but unaffected by EDTA. Specifically deglycosylates the denatured form of N-linked glycoproteins in the cytoplasm and assists their proteasome-mediated degradation. Cleaves the beta-aspartyl-glucosamine (GlcNAc) of the glycan and the amide side chain of Asn, converting Asn to Asp. Prefers proteins containing high-mannose over those bearing complex type oligosaccharides. Can recognize misfolded proteins in the endoplasmic reticulum that are exported to the cytosol to be destroyed and deglycosylate them, while it has no activity toward native proteins. Deglycosylation is a prerequisite for subsequent proteasome-mediated degradation of some, but not all, misfolded glycoproteins. Also displays oxidoreductase (thioredoxin) activity. Involved in regulating the expression of proteasomal subunits such as rpt-3 in order to confer resistance to proteasomal dysfunction. In Caenorhabditis elegans, this protein is Peptide-N(4)-(N-acetyl-beta-glucosaminyl)asparagine amidase (png-1).